The chain runs to 320 residues: MQTRKTLSWIKEEITRSISLSLMLSIITHASLSNAYPIFAQQGYENPREATGRIVCANCHLANKPVDIEVPQTVLPDTVFEAVVRIPYDMQIKQVLANGKKGALNVGAVLILPEGFELAPPDRISPEMKEKIGNLPFQSYRPTQKNILVIGPVPGQKYSEIAFPILSPNPETNKDVHFLKYPIYVGGNRGRGQIYPDGSKSNNTVSNATAAGIVSKIIRKERGGYEITIADASNGRQVVDIIPPGPELLVSEGESLKVDQPLTSNPNVGGFGQGDAEIVLQDPLRVQGLLFFLTSVLLAQIFLVLKKKQFEKVQLSEMNF.

Positions 1 to 35 (MQTRKTLSWIKEEITRSISLSLMLSIITHASLSNA) are cleaved as a signal peptide. The heme site is built by tyrosine 36, cysteine 56, cysteine 59, and histidine 60. The chain crosses the membrane as a helical span at residues 286–306 (VQGLLFFLTSVLLAQIFLVLK).

This sequence belongs to the cytochrome f family. In terms of assembly, the 4 large subunits of the cytochrome b6-f complex are cytochrome b6, subunit IV (17 kDa polypeptide, petD), cytochrome f and the Rieske protein, while the 4 small subunits are PetG, PetL, PetM and PetN. The complex functions as a dimer. Heme is required as a cofactor.

It localises to the plastid. The protein resides in the chloroplast thylakoid membrane. Its function is as follows. Component of the cytochrome b6-f complex, which mediates electron transfer between photosystem II (PSII) and photosystem I (PSI), cyclic electron flow around PSI, and state transitions. The protein is Cytochrome f of Pelargonium hortorum (Common geranium).